The primary structure comprises 303 residues: Di/tripeptide transport system permease protein DppC (303 aa).

7 consecutive transmembrane segments (helical) span residues 33-53 (ALGG…APWV), 103-123 (LLIG…LGLL), 131-151 (AGPL…LLLA), 152-172 (VAIV…IAIV), 202-222 (AGTL…PLIV), 225-245 (TLSF…GLGV), and 267-287 (WWVV…INLM). In terms of domain architecture, ABC transmembrane type-1 spans 99–288 (ARLSLLIGLS…LSVLAINLMG (190 aa)).

This sequence belongs to the binding-protein-dependent transport system permease family. OppBC subfamily. The complex is composed of two ATP-binding proteins (DppD and DppF), two transmembrane proteins (DppB and DppC) and a solute-binding protein (DppA1-A5). Five orthologous SBPs (DppA1-A5) are present in P.aeruginosa, which increases the substrate specificity of the DppBCDF transporter.

It is found in the cell inner membrane. Its function is as follows. Part of the ABC transporter DppABCDF involved in the uptake of various di/tripeptides. Is also involved in the uptake of phaseolotoxin, a toxic tripeptide inhibiting the enzyme ornithine carbamoyltransferase. Responsible for the translocation of the substrate across the membrane. The sequence is that of Di/tripeptide transport system permease protein DppC from Pseudomonas aeruginosa (strain UCBPP-PA14).